Here is a 263-residue protein sequence, read N- to C-terminus: Aquaporin-8 (263 aa).

Topologically, residues 1-38 (MSGEQTPMCSMDLREIKGKETNMADSYHGMSWYEQYIQ) are cytoplasmic. Residues 39–59 (PCVVELLGSALFIFIGCLSVI) form a helical membrane-spanning segment. Residue C55 is modified to Cysteine persulfide. C55 is subject to Cysteine sulfenic acid (-SOH). Over 60–86 (ENSPNTGLLQPALAHGLALGLIIATLG) the chain is Extracellular. A helical membrane pass occupies residues 87–107 (NISGGHFNPAVSLAVTLVGGL). The short motif at 94–96 (NPA) is the NPA 1 element. Topologically, residues 108–109 (KT) are cytoplasmic. A helical transmembrane segment spans residues 110-130 (MLLIPYWVSQLFGGMIGAALA). Topologically, residues 131–158 (KVVSPEERFWNASGAAFAIVQEQEQVAE) are extracellular. The N-linked (GlcNAc...) asparagine glycan is linked to N141. Residues 159–179 (ALGVEIVMTMLLVLAVCMGAV) form a helical membrane-spanning segment. Residues 180–185 (NEKTMG) lie on the Cytoplasmic side of the membrane. The chain crosses the membrane as a helical span at residues 186–206 (PLAPFSIGFSVIVDILAGGGI). Topologically, residues 207-230 (SGACMNPARAFGPAVMAGYWDFHW) are extracellular. Positions 212–214 (NPA) match the NPA 2 motif. A helical membrane pass occupies residues 231–251 (IYWLGPLLAGLFVGLLIRLFI). Topologically, residues 252–263 (GDEKTRLILKSR) are cytoplasmic.

Belongs to the MIP/aquaporin (TC 1.A.8) family. In terms of processing, N-glycosylated. Sulfenylation at Cys-55(C55-SOH) when hydrogen peroxide flows through the AQP8 channel, making it susceptible to hydrogen sulfide produced by CBS. Post-translationally, persulfidation at Cys-55 is required to gate AQP8 channel; under stress condition, hydrogen peroxide accumulates in the cell leading to CBS activation that produces hydrogen sulfide inducing persulfidation of oxidized Cys-55 (C55-SOH). Highly expressed in sperm, pancreas and liver. Expressed in hepatocytes, acinal cells of pancreas and salivary gland, and absorptive colonic epithelial cells. Expressed in the myoepithelium of submandibular and parotid glands. Expressed in pancreatic beta-cells. Expressed in testis but not in epididymis. Expressed in small intestine.

The protein localises to the cell membrane. The protein resides in the mitochondrion inner membrane. It is found in the apical cell membrane. It localises to the basolateral cell membrane. Its subcellular location is the smooth endoplasmic reticulum membrane. It catalyses the reaction H2O(in) = H2O(out). The enzyme catalyses NH4(+)(in) = NH4(+)(out). It carries out the reaction H2O2(out) = H2O2(in). The catalysed reaction is formamide(out) = formamide(in). It catalyses the reaction methylamine(out) = methylamine(in). Reversibly gated by a two-step sulfenylation-persulfidation process in cells undergoing diverse stresses. Its function is as follows. Channel that allows the facilitated permeation of water and uncharged molecules, such as hydrogen peroxide and the neutral form of ammonia (NH3), through cellular membranes such as plasma membrane, inner mitochondrial membrane and endoplasmic reticulum membrane of several tissues. The transport of ammonia neutral form induces a parallel transport of proton, at alkaline pH when the concentration of ammonia is high. However, it is unclear whether the transport of proton takes place via the aquaporin or via an endogenous pathway. Also, may transport ammonia analogs such as formamide and methylamine, a transport favourited at basic pH due to the increase of unprotonated (neutral) form, which is expected to favor diffusion. Does not transport urea or glycerol. The water transport mechanism is mercury- and copper-sensitive and passive in response to osmotic driving forces. At the canicular plasma membrane, mediates the osmotic transport of water toward the bile canaliculus and facilitates the cAMP-induced bile canalicular water secretion, a process involved in bile formation. In addition, mediates the hydrogen peroxide release from hepatocyte mitochondria that modulates the SREBF2-mediated cholesterol synthesis and facilitates the mitochondrial ammonia uptake which is metabolized into urea, mainly under glucagon stimulation. In B cells, transports the CYBB-generated hydrogen peroxide from the external leaflet of the plasma membrane to the cytosol to promote B cell activation and differentiation for signal amplification. In the small intestine and colon system, mediates water transport through mitochondria and apical membrane of epithelial cells. May play an important role in the adaptive response of proximal tubule cells to acidosis possibly facilitating mitochondrial ammonia transport. In Rattus norvegicus (Rat), this protein is Aquaporin-8.